The following is a 395-amino-acid chain: 1-deoxy-D-xylulose 5-phosphate reductoisomerase (395 aa).

Threonine 10, glycine 11, serine 12, isoleucine 13, lysine 37, and asparagine 123 together coordinate NADPH. Lysine 124 provides a ligand contact to 1-deoxy-D-xylulose 5-phosphate. Glutamate 125 is a binding site for NADPH. Aspartate 149 is a binding site for Mn(2+). The 1-deoxy-D-xylulose 5-phosphate site is built by serine 150, glutamate 151, serine 185, and histidine 208. Glutamate 151 lines the Mn(2+) pocket. Residue glycine 214 coordinates NADPH. Positions 221, 226, 227, and 230 each coordinate 1-deoxy-D-xylulose 5-phosphate. Glutamate 230 provides a ligand contact to Mn(2+).

It belongs to the DXR family. Mg(2+) is required as a cofactor. The cofactor is Mn(2+).

The enzyme catalyses 2-C-methyl-D-erythritol 4-phosphate + NADP(+) = 1-deoxy-D-xylulose 5-phosphate + NADPH + H(+). It participates in isoprenoid biosynthesis; isopentenyl diphosphate biosynthesis via DXP pathway; isopentenyl diphosphate from 1-deoxy-D-xylulose 5-phosphate: step 1/6. Functionally, catalyzes the NADPH-dependent rearrangement and reduction of 1-deoxy-D-xylulose-5-phosphate (DXP) to 2-C-methyl-D-erythritol 4-phosphate (MEP). The polypeptide is 1-deoxy-D-xylulose 5-phosphate reductoisomerase (Shewanella loihica (strain ATCC BAA-1088 / PV-4)).